Here is an 84-residue protein sequence, read N- to C-terminus: Kidney-associated antigen 1 (84 aa).

The segment at 31-84 (PGAAAAHLPRWPPPQLAASRREAPPLSQRPHRTQGAGSPPETNEKLTNPQVKEK) is disordered. A compositionally biased stretch (polar residues) spans 75–84 (KLTNPQVKEK).

Expressed in testis and kidney, and, at lower levels, in urinary bladder and liver. Expressed by a high proportion of tumors of various histologic origin, including melanomas, sarcomas and colorectal carcinomas.

This Homo sapiens (Human) protein is Kidney-associated antigen 1 (KAAG1).